Here is a 521-residue protein sequence, read N- to C-terminus: Bifunctional purine biosynthesis protein PurH (521 aa).

Positions 1–147 (MAKITRALIS…KNNADVTVVV (147 aa)) constitute an MGS-like domain.

This sequence belongs to the PurH family.

The enzyme catalyses (6R)-10-formyltetrahydrofolate + 5-amino-1-(5-phospho-beta-D-ribosyl)imidazole-4-carboxamide = 5-formamido-1-(5-phospho-D-ribosyl)imidazole-4-carboxamide + (6S)-5,6,7,8-tetrahydrofolate. The catalysed reaction is IMP + H2O = 5-formamido-1-(5-phospho-D-ribosyl)imidazole-4-carboxamide. It participates in purine metabolism; IMP biosynthesis via de novo pathway; 5-formamido-1-(5-phospho-D-ribosyl)imidazole-4-carboxamide from 5-amino-1-(5-phospho-D-ribosyl)imidazole-4-carboxamide (10-formyl THF route): step 1/1. The protein operates within purine metabolism; IMP biosynthesis via de novo pathway; IMP from 5-formamido-1-(5-phospho-D-ribosyl)imidazole-4-carboxamide: step 1/1. The polypeptide is Bifunctional purine biosynthesis protein PurH (Geobacter metallireducens (strain ATCC 53774 / DSM 7210 / GS-15)).